We begin with the raw amino-acid sequence, 325 residues long: Biotin synthase (325 aa).

The 230-residue stretch at Tyr52 to Arg281 folds into the Radical SAM core domain. Cys70, Cys74, and Cys77 together coordinate [4Fe-4S] cluster. The [2Fe-2S] cluster site is built by Ser114, Cys146, and Cys206.

The protein belongs to the radical SAM superfamily. Biotin synthase family. In terms of assembly, homodimer. Requires [4Fe-4S] cluster as cofactor. [2Fe-2S] cluster serves as cofactor.

It carries out the reaction (4R,5S)-dethiobiotin + (sulfur carrier)-SH + 2 reduced [2Fe-2S]-[ferredoxin] + 2 S-adenosyl-L-methionine = (sulfur carrier)-H + biotin + 2 5'-deoxyadenosine + 2 L-methionine + 2 oxidized [2Fe-2S]-[ferredoxin]. Its pathway is cofactor biosynthesis; biotin biosynthesis; biotin from 7,8-diaminononanoate: step 2/2. In terms of biological role, catalyzes the conversion of dethiobiotin (DTB) to biotin by the insertion of a sulfur atom into dethiobiotin via a radical-based mechanism. The sequence is that of Biotin synthase from Syntrophus aciditrophicus (strain SB).